We begin with the raw amino-acid sequence, 106 residues long: Putative membrane protein insertion efficiency factor (106 aa).

It belongs to the UPF0161 family.

The protein resides in the cell inner membrane. In terms of biological role, could be involved in insertion of integral membrane proteins into the membrane. The chain is Putative membrane protein insertion efficiency factor from Acinetobacter baumannii (strain SDF).